Reading from the N-terminus, the 38-residue chain is MKVRASVKKICDKCKIVRRKGIVRIICASNPRHKQRQG.

The protein belongs to the bacterial ribosomal protein bL36 family.

The sequence is that of Large ribosomal subunit protein bL36 from Myxococcus xanthus (strain DK1622).